Consider the following 478-residue polypeptide: Aspartate ammonia-lyase (478 aa).

Threonine 104, serine 143, threonine 144, asparagine 145, and threonine 190 together coordinate L-aspartate. The tract at residues 320–329 is SS loop; sequence GSSIMPAKVN. Serine 321 functions as the Proton acceptor in the catalytic mechanism. Positions 322 and 327 each coordinate L-aspartate.

Belongs to the class-II fumarase/aspartase family. Aspartase subfamily. As to quaternary structure, homotetramer.

It catalyses the reaction L-aspartate = fumarate + NH4(+). In terms of biological role, catalyzes the reversible conversion of L-aspartate to fumarate and ammonia. In Escherichia coli O157:H7, this protein is Aspartate ammonia-lyase (aspA).